The following is a 313-amino-acid chain: MNVGIKGFGAYAPKNIIDNAYFEQFLETSDEWISKMTGIKERHWADEDQDTSDLAYNASIKAIEDAGIQPVDIDMIIVATATGDMPFPSVANILQERLGTGKVATMDQLAACSGFMYSMITAKQYIQSGDYKHILVVGADKLSKITDMTDRSTAVLFGDGAGAVVMGEVAEGRGIISYEMGSDGSGGKYLYLDRETGKLKMNGREVFKFAVRIMGDASTRVVEKAGLSSEDIDLFVPHQANIRIMESARERLGIEREKMSVSVNKYGNTSAASIPLSINQELQNGKIKDDDTLVLVGFGGGLTWGAIVIKWGK.

Catalysis depends on residues Cys112 and His238. The ACP-binding stretch occupies residues 239 to 243 (QANIR). Asn268 is a catalytic residue.

Belongs to the thiolase-like superfamily. FabH family. As to quaternary structure, homodimer.

It localises to the cytoplasm. It catalyses the reaction malonyl-[ACP] + acetyl-CoA + H(+) = 3-oxobutanoyl-[ACP] + CO2 + CoA. Its pathway is lipid metabolism; fatty acid biosynthesis. In terms of biological role, catalyzes the condensation reaction of fatty acid synthesis by the addition to an acyl acceptor of two carbons from malonyl-ACP. Catalyzes the first condensation reaction which initiates fatty acid synthesis and may therefore play a role in governing the total rate of fatty acid production. Possesses both acetoacetyl-ACP synthase and acetyl transacylase activities. Its substrate specificity determines the biosynthesis of branched-chain and/or straight-chain of fatty acids. In Staphylococcus epidermidis (strain ATCC 35984 / DSM 28319 / BCRC 17069 / CCUG 31568 / BM 3577 / RP62A), this protein is Beta-ketoacyl-[acyl-carrier-protein] synthase III.